Here is a 268-residue protein sequence, read N- to C-terminus: MKTRLFNFTKWWLTGFTQADGGFVVNFDARKQGNLPYYPRPSFVLTQNIREEQMMIELHGVGKLYYSRNEINIVVRSQDDITNVIIPHFDNYSLRGHKLSSYFLFKEVVLMMNNGKHLSPFLQILELCYFTNHTTRRTLDTKKAILDKIYNKFGFVQFEPIIESNLSKPNSNPINNDYMVGLVDGDGSFNFGFKSTRRRIVPNFTIVQGVEDRSVLEDVQSYLDCGKVYDLQSQTSRYQVENVTDLVEKVLPEFKENKFNTTKKDYTL.

It belongs to the LAGLIDADG endonuclease family.

It is found in the mitochondrion. Mitochondrial DNA endonuclease involved in intron homing. This Mycosarcoma maydis (Corn smut fungus) protein is Probable intron-encoded DNA endonuclease 1 (hegI1).